The sequence spans 256 residues: Hydroxyacylglutathione hydrolase (256 aa).

Zn(2+)-binding residues include H57, H59, D61, H62, H115, D134, and H172.

This sequence belongs to the metallo-beta-lactamase superfamily. Glyoxalase II family. In terms of assembly, monomer. Zn(2+) serves as cofactor.

The catalysed reaction is an S-(2-hydroxyacyl)glutathione + H2O = a 2-hydroxy carboxylate + glutathione + H(+). It functions in the pathway secondary metabolite metabolism; methylglyoxal degradation; (R)-lactate from methylglyoxal: step 2/2. In terms of biological role, thiolesterase that catalyzes the hydrolysis of S-D-lactoyl-glutathione to form glutathione and D-lactic acid. This Rhizobium etli (strain ATCC 51251 / DSM 11541 / JCM 21823 / NBRC 15573 / CFN 42) protein is Hydroxyacylglutathione hydrolase.